The following is a 203-amino-acid chain: Guanylate kinase (203 aa).

One can recognise a Guanylate kinase-like domain in the interval 5-184; the sequence is GMLIVLSGPS…AVQRIEKIIE (180 aa). 12–19 contacts ATP; that stretch reads GPSGVGKG.

Belongs to the guanylate kinase family.

Its subcellular location is the cytoplasm. The enzyme catalyses GMP + ATP = GDP + ADP. Its function is as follows. Essential for recycling GMP and indirectly, cGMP. This chain is Guanylate kinase, found in Latilactobacillus sakei subsp. sakei (strain 23K) (Lactobacillus sakei subsp. sakei).